The sequence spans 176 residues: Large ribosomal subunit protein uL6 (176 aa).

The span at Arg-151 to Arg-170 shows a compositional bias: basic and acidic residues. A disordered region spans residues Arg-151–Lys-176.

Belongs to the universal ribosomal protein uL6 family. As to quaternary structure, part of the 50S ribosomal subunit.

This protein binds to the 23S rRNA, and is important in its secondary structure. It is located near the subunit interface in the base of the L7/L12 stalk, and near the tRNA binding site of the peptidyltransferase center. In Shewanella loihica (strain ATCC BAA-1088 / PV-4), this protein is Large ribosomal subunit protein uL6.